The primary structure comprises 190 residues: Large ribosomal subunit protein uL10 (190 aa).

The disordered stretch occupies residues 170–190 (AAGAPAEAAPVEAPAAETVDA).

It belongs to the universal ribosomal protein uL10 family. As to quaternary structure, part of the ribosomal stalk of the 50S ribosomal subunit. The N-terminus interacts with L11 and the large rRNA to form the base of the stalk. The C-terminus forms an elongated spine to which L12 dimers bind in a sequential fashion forming a multimeric L10(L12)X complex.

Functionally, forms part of the ribosomal stalk, playing a central role in the interaction of the ribosome with GTP-bound translation factors. This chain is Large ribosomal subunit protein uL10, found in Kineococcus radiotolerans (strain ATCC BAA-149 / DSM 14245 / SRS30216).